Reading from the N-terminus, the 233-residue chain is tRNA (guanine-N(7)-)-methyltransferase (233 aa).

S-adenosyl-L-methionine contacts are provided by E65, E90, D117, and D139. D139 is an active-site residue. Substrate is bound by residues K143, D175, and 212–215 (TRYE).

It belongs to the class I-like SAM-binding methyltransferase superfamily. TrmB family.

It carries out the reaction guanosine(46) in tRNA + S-adenosyl-L-methionine = N(7)-methylguanosine(46) in tRNA + S-adenosyl-L-homocysteine. It functions in the pathway tRNA modification; N(7)-methylguanine-tRNA biosynthesis. Catalyzes the formation of N(7)-methylguanine at position 46 (m7G46) in tRNA. The polypeptide is tRNA (guanine-N(7)-)-methyltransferase (Roseobacter denitrificans (strain ATCC 33942 / OCh 114) (Erythrobacter sp. (strain OCh 114))).